The primary structure comprises 868 residues: Sporulation-specific protein 75 (868 aa).

Residues 1–34 (MNATKELTFNLLNKFQDKERFGSAQRHAGISLKG) are Extracellular-facing. An N-linked (GlcNAc...) asparagine glycan is attached at asparagine 2. A helical membrane pass occupies residues 35–55 (FISGILFSFLYFLFQLSLFII). Over 56-127 (LRSRFKTIYQ…DNYLFLRFLK (72 aa)) the chain is Cytoplasmic. A helical transmembrane segment spans residues 128–148 (LLIFFFAVLSIINIPILIPIH). At 149 to 187 (YFSRDILKENEGERYEQSFRTTSKLDKWTMSNLSPNSSN) the chain is on the extracellular side. N-linked (GlcNAc...) asparagine glycosylation occurs at asparagine 184. The helical transmembrane segment at 188–208 (TLICHLFLSIFVVLWFHFILS) threads the bilayer. Topologically, residues 209 to 481 (SELRFVNRLG…AKYFSANILR (273 aa)) are cytoplasmic. A helical transmembrane segment spans residues 482–502 (IFVIIGWILPVAFLGLISQIP). Asparagine 503 carries N-linked (GlcNAc...) asparagine glycosylation. Over 503–527 (NISSLIPFTKIIHFQSPFIREVAKN) the chain is Extracellular. Residues 528-548 (LIPIVTLIIIIEIVPYFFRWL) traverse the membrane as a helical segment. Topologically, residues 549-569 (SYLRGLKTGAQIEADVQNWYF) are cytoplasmic. A helical membrane pass occupies residues 570-590 (VFVFIHLFVVVTISSGFSIII). Topologically, residues 591–611 (ERLLNNPVSIPALLANDLPKC) are extracellular. A helical membrane pass occupies residues 612–632 (ANFFCSFVLIRGMAYAGGNLL). Over 633 to 660 (RIKELLFELFYYKWKRSTPHAQFKRLKT) the chain is Cytoplasmic. The chain crosses the membrane as a helical span at residues 661-683 (SLFFQLGSIYPIFSVLGCIGIIY). The Extracellular portion of the chain corresponds to 684–692 (SVVAPIILL). A helical membrane pass occupies residues 693–713 (LCCISFSMVFFSFSYLFKYQY). At 714–730 (NKENYSETFGKLYIQAL) the chain is on the cytoplasmic side. The chain crosses the membrane as a helical span at residues 731–751 (MQLYAGIYFMEFCLLGLFTLF). The Extracellular portion of the chain corresponds to 752-753 (DQ). Residues 754-774 (YTLSTIMLVVFALTVITHSKI) form a helical membrane-spanning segment. Topologically, residues 775–868 (SKQIKSKPQR…DCHLENSHLH (94 aa)) are cytoplasmic.

The protein belongs to the CSC1 (TC 1.A.17) family.

It is found in the membrane. In terms of biological role, acts as an osmosensitive calcium-permeable cation channel. Required for spore wall assembly and ascus formation. The protein is Sporulation-specific protein 75 (SPO75) of Saccharomyces cerevisiae (strain ATCC 204508 / S288c) (Baker's yeast).